A 286-amino-acid polypeptide reads, in one-letter code: Alpha-ketoglutarate-dependent dioxygenase alkB homolog 3 (286 aa).

Residues 1–46 (MEDKRQRARVQGGWATPTKSQSATQPASPARSRLSQTAGPAWRSKE) form a disordered region. The span at 17-38 (PTKSQSATQPASPARSRLSQTA) shows a compositional bias: polar residues. Substrate-binding positions include Trp115 and 141–143 (YTY). Residues 172–278 (TFNSLLCNFY…RVNLTFRTVY (107 aa)) enclose the Fe2OG dioxygenase domain. Residue Leu177 is modified to (4R)-5-hydroxyleucine; alternate. Leu177 bears the (4R)-5-oxoleucine; alternate mark. 179-181 (NFY) provides a ligand contact to 2-oxoglutarate. Fe cation-binding residues include His191 and Asp193. A substrate-binding site is contributed by Asp194. His257 is a Fe cation binding site. Residues 269–275 (RVNLTFR) and Arg275 each bind 2-oxoglutarate.

It belongs to the alkB family. In terms of assembly, interacts with the ASCC complex composed of ASCC1, ASCC2 and ASCC3. Interacts directly with ASCC3, and is thereby recruited to the ASCC complex. Interacts with OTUD4; the interaction is direct. Interacts with USP7 and USP9X. Fe(2+) serves as cofactor. Post-translationally, ubiquitinated; undergoes 'Lys-48'-linked polyubiquitination. OTUD4 promotes USP7 and USP9X-dependent deubiquitination of 'Lys-48'-polyubiquitinated ALKBH3 promoting the repair of alkylated DNA lesions. As to expression, detected in testis, kidney, liver and heart.

The protein localises to the nucleus. The protein resides in the cytoplasm. It carries out the reaction an N(1)-methyladenosine in mRNA + 2-oxoglutarate + O2 = an adenosine in mRNA + formaldehyde + succinate + CO2. It catalyses the reaction a methylated nucleobase within DNA + 2-oxoglutarate + O2 = a nucleobase within DNA + formaldehyde + succinate + CO2. The catalysed reaction is an N(1)-methyl-2'-deoxyadenosine in single-stranded DNA + 2-oxoglutarate + O2 = a 2'-deoxyadenosine in single-stranded DNA + formaldehyde + succinate + CO2 + H(+). The enzyme catalyses an N(3)-methyl-2'-deoxycytidine in single-stranded DNA + 2-oxoglutarate + O2 = a 2'-deoxycytidine in single-stranded DNA + formaldehyde + succinate + CO2 + H(+). It carries out the reaction a 3,N(4)-etheno-2'-deoxycytidine in single-stranded DNA + 2-oxoglutarate + O2 + H2O = a 2'-deoxycytidine in single-stranded DNA + glyoxal + succinate + CO2. Its activity is regulated as follows. Activated by ascorbate. In terms of biological role, dioxygenase that mediates demethylation of DNA and RNA containing 1-methyladenosine (m1A). Repairs alkylated DNA containing 1-methyladenosine (m1A) and 3-methylcytosine (m3C) by oxidative demethylation. Has a strong preference for single-stranded DNA. Able to process alkylated m3C within double-stranded regions via its interaction with ASCC3, which promotes DNA unwinding to generate single-stranded substrate needed for ALKBH3. Can repair exocyclic 3,N4-ethenocytosine adducs in single-stranded DNA. Also acts on RNA. Demethylates N(1)-methyladenosine (m1A) RNA, an epigenetic internal modification of messenger RNAs (mRNAs) highly enriched within 5'-untranslated regions (UTRs) and in the vicinity of start codons. Requires molecular oxygen, alpha-ketoglutarate and iron. The sequence is that of Alpha-ketoglutarate-dependent dioxygenase alkB homolog 3 from Mus musculus (Mouse).